The primary structure comprises 523 residues: DNA-directed primase/polymerase protein (523 aa).

Substrate-binding positions include Arg-78, 117-119, and 168-172; these read DLE and KFSHH. Residues Asp-117 and Glu-119 each contribute to the Mn(2+) site. The interval 203 to 230 is disordered; it reads LKKSNPEAPGENRDDVEGTQAKRRKTEE. Residues 258 to 261 and Lys-267 contribute to the substrate site; that span reads RNFR. The Zn(2+) site is built by Cys-390, His-397, Cys-417, and Cys-422. The Zinc knuckle motif signature appears at 390 to 423; it reads CHNVKRFHKSNNIIIVVDLKEEVWYQKCHDPECR. Residues 467–477 are compositionally biased toward low complexity; the sequence is APAESTSTTPS. The interval 467 to 523 is disordered; that stretch reads APAESTSTTPSEDTEGWGDWPDDPAYLRALQEVEEEEEDEDEEVPDELLLQAVNECE. Acidic residues-rich tracts occupy residues 478–488 and 498–512; these read EDTEGWGDWPD and EVEEEEEDEDEEVPD.

It belongs to the eukaryotic-type primase small subunit family. Mn(2+) is required as a cofactor.

The protein resides in the nucleus. The protein localises to the mitochondrion matrix. It is found in the chromosome. It carries out the reaction ssDNA + n NTP = ssDNA/pppN(pN)n-1 hybrid + (n-1) diphosphate.. It catalyses the reaction DNA(n) + a 2'-deoxyribonucleoside 5'-triphosphate = DNA(n+1) + diphosphate. Its function is as follows. DNA primase and DNA polymerase required to tolerate replication-stalling lesions by bypassing them. Required to facilitate mitochondrial and nuclear replication fork progression by initiating de novo DNA synthesis using dNTPs and acting as an error-prone DNA polymerase able to bypass certain DNA lesions. Shows a high capacity to tolerate DNA damage lesions such as 8oxoG and abasic sites in DNA. Provides different translesion synthesis alternatives when DNA replication is stalled: able to synthesize DNA primers downstream of lesions, such as UV lesions, R-loops and G-quadruplexes, to allow DNA replication to continue. Can also realign primers ahead of 'unreadable lesions' such as abasic sites and 6-4 photoproduct (6-4 pyrimidine-pyrimidinone), thereby skipping the lesion. Repriming avoids fork degradation while leading to accumulation of internal ssDNA gaps behind the forks. Also able to incorporate nucleotides opposite DNA lesions such as 8oxoG, like a regular translesion synthesis DNA polymerase. Also required for reinitiating stalled forks after ultraviolet (UV) damage during nuclear DNA replication. Required for mitochondrial DNA (mtDNA) synthesis and replication, by reinitiating synthesis after UV damage or in the presence of chain-terminating nucleotides. In addition to its role in DNA damage response, also required to maintain efficient nuclear and mitochondrial DNA replication in unperturbed cells. In Danio rerio (Zebrafish), this protein is DNA-directed primase/polymerase protein.